The primary structure comprises 335 residues: MALRWGIVSAGLISSDFTTVLRLLPRSEHQVVAVAARDLSRAKEFARKHDIPKAYGSYEELAKDPNVEVAYIGTQHPQHKATVLLCLAAGKAVLCEKPMGVNAAEVREMVAEARSRGLFLMEAIWTRFFPAVEALRSVLAQETLGDLRVVQANFGKSIANVPRSVDWAQAGGSLLDLGIYCLQFISMVYGGQKPEKISAVGRRYETGVDDTVSVLLQYPGGVQGSFTCSITSQLSNTVSVSGTKGMAQILDPCWCPTELVVKGEHKEFPLPSAPGEEFNYTNGMGMCYEAKHVRECLKKGLKESPMITLAESELLADILEEVRKAIGVTFPQDKC.

This sequence belongs to the Gfo/Idh/MocA family. As to quaternary structure, homodimer. As to expression, liver, lens, spleen, kidney and small intestine.

It catalyses the reaction (1R,2R)-1,2-dihydrobenzene-1,2-diol + NADP(+) = catechol + NADPH + H(+). The enzyme catalyses D-xylose + NADP(+) = D-xylono-1,5-lactone + NADPH + H(+). With respect to regulation, strongly inhibited by isoascorbic acid, 4-hydroxyacetophenone and chloromercuriphenylsulphonate. Stimulated by various salts. In Sus scrofa (Pig), this protein is Trans-1,2-dihydrobenzene-1,2-diol dehydrogenase (DHDH).